A 469-amino-acid polypeptide reads, in one-letter code: 23S rRNA (uracil(1939)-C(5))-methyltransferase RlmD (469 aa).

Residues 11–69 (PKTSNQRLTVTVDKLDMNGVGVARWQNKPIFIAGVLPDEIVDVKVIEQKSKYARAKLIS) form the TRAM domain. C82, C88, C91, and C178 together coordinate [4Fe-4S] cluster. Q300, F329, N334, E350, D377, and D399 together coordinate S-adenosyl-L-methionine. C425 acts as the Nucleophile in catalysis.

It belongs to the class I-like SAM-binding methyltransferase superfamily. RNA M5U methyltransferase family. RlmD subfamily.

It catalyses the reaction uridine(1939) in 23S rRNA + S-adenosyl-L-methionine = 5-methyluridine(1939) in 23S rRNA + S-adenosyl-L-homocysteine + H(+). Catalyzes the formation of 5-methyl-uridine at position 1939 (m5U1939) in 23S rRNA. This chain is 23S rRNA (uracil(1939)-C(5))-methyltransferase RlmD, found in Colwellia psychrerythraea (strain 34H / ATCC BAA-681) (Vibrio psychroerythus).